A 360-amino-acid chain; its full sequence is Photosystem II protein D1 (360 aa).

3 helical membrane passes run 29–46 (YIGW…TATT), 118–133 (HFLL…EWEF), and 142–156 (WISV…AASA). His118 provides a ligand contact to chlorophyll a. Trp126 serves as a coordination point for pheophytin a. 2 residues coordinate [CaMn4O5] cluster: Asp170 and Glu189. Residues 197–218 (FHQLGVAGVFGGSLFSAMHGSL) traverse the membrane as a helical segment. His198 is a chlorophyll a binding site. Residues His215 and 264-265 (SF) contribute to the a quinone site. Residue His215 participates in Fe cation binding. His272 is a Fe cation binding site. A helical membrane pass occupies residues 274–288 (FLGLWPVVGIWFTAL). [CaMn4O5] cluster contacts are provided by His332, Glu333, Asp342, and Ala344. Residues 345–360 (SGESLPVALTAPAVIG) constitute a propeptide that is removed on maturation.

Belongs to the reaction center PufL/M/PsbA/D family. PSII is composed of 1 copy each of membrane proteins PsbA, PsbB, PsbC, PsbD, PsbE, PsbF, PsbH, PsbI, PsbJ, PsbK, PsbL, PsbM, PsbT, PsbX, PsbY, PsbZ, Psb30/Ycf12, at least 3 peripheral proteins of the oxygen-evolving complex and a large number of cofactors. It forms dimeric complexes. The D1/D2 heterodimer binds P680, chlorophylls that are the primary electron donor of PSII, and subsequent electron acceptors. It shares a non-heme iron and each subunit binds pheophytin, quinone, additional chlorophylls, carotenoids and lipids. D1 provides most of the ligands for the Mn4-Ca-O5 cluster of the oxygen-evolving complex (OEC). There is also a Cl(-1) ion associated with D1 and D2, which is required for oxygen evolution. The PSII complex binds additional chlorophylls, carotenoids and specific lipids. serves as cofactor. Tyr-161 forms a radical intermediate that is referred to as redox-active TyrZ, YZ or Y-Z. In terms of processing, C-terminally processed by CTPA; processing is essential to allow assembly of the oxygen-evolving complex and thus photosynthetic growth.

It is found in the plastid. It localises to the chloroplast thylakoid membrane. The catalysed reaction is 2 a plastoquinone + 4 hnu + 2 H2O = 2 a plastoquinol + O2. In terms of biological role, photosystem II (PSII) is a light-driven water:plastoquinone oxidoreductase that uses light energy to abstract electrons from H(2)O, generating O(2) and a proton gradient subsequently used for ATP formation. It consists of a core antenna complex that captures photons, and an electron transfer chain that converts photonic excitation into a charge separation. The D1/D2 (PsbA/PsbD) reaction center heterodimer binds P680, the primary electron donor of PSII as well as several subsequent electron acceptors. In Guillardia theta (Cryptophyte), this protein is Photosystem II protein D1.